Consider the following 392-residue polypeptide: Chorismate synthase (392 aa).

NADP(+) is bound by residues arginine 39 and arginine 45. FMN-binding positions include 128-130 (RSS), 248-249 (QA), glycine 300, 315-319 (KPIPT), and arginine 341.

It belongs to the chorismate synthase family. In terms of assembly, homotetramer. It depends on FMNH2 as a cofactor.

The enzyme catalyses 5-O-(1-carboxyvinyl)-3-phosphoshikimate = chorismate + phosphate. The protein operates within metabolic intermediate biosynthesis; chorismate biosynthesis; chorismate from D-erythrose 4-phosphate and phosphoenolpyruvate: step 7/7. Functionally, catalyzes the anti-1,4-elimination of the C-3 phosphate and the C-6 proR hydrogen from 5-enolpyruvylshikimate-3-phosphate (EPSP) to yield chorismate, which is the branch point compound that serves as the starting substrate for the three terminal pathways of aromatic amino acid biosynthesis. This reaction introduces a second double bond into the aromatic ring system. This is Chorismate synthase from Trichlorobacter lovleyi (strain ATCC BAA-1151 / DSM 17278 / SZ) (Geobacter lovleyi).